We begin with the raw amino-acid sequence, 239 residues long: MATPHINAEMGDFADVVLMPGDPLRAKHIAETFLEDVREVNNVRGMLGFTGTYKGRKISVMGHGMGIPSCSIYTKELITDFGVKKIIRVGSCGAVRNDVKLRDVVIGMGACTDSKVNRIRFKDHDFAAIADFDMVRNAVDAAKALGVDARVGNLFSADLFYSPDGEMFDVMEKYGILGVEMEAAGIYGVAAEFGAKALTICTVSDHIRTHEQTTAAERQTTFNDMIKIALESVLLGDKA.

His5 contacts a purine D-ribonucleoside. Residues Gly21, Arg25, Arg44, and 88–91 (RVGS) contribute to the phosphate site. A purine D-ribonucleoside-binding positions include 180-182 (EME) and 204-205 (SD). Residue Asp205 is the Proton donor of the active site.

The protein belongs to the PNP/UDP phosphorylase family. As to quaternary structure, homohexamer; trimer of homodimers.

It carries out the reaction a purine D-ribonucleoside + phosphate = a purine nucleobase + alpha-D-ribose 1-phosphate. The enzyme catalyses a purine 2'-deoxy-D-ribonucleoside + phosphate = a purine nucleobase + 2-deoxy-alpha-D-ribose 1-phosphate. In terms of biological role, catalyzes the reversible phosphorolytic breakdown of the N-glycosidic bond in the beta-(deoxy)ribonucleoside molecules, with the formation of the corresponding free purine bases and pentose-1-phosphate. The protein is Purine nucleoside phosphorylase DeoD-type of Citrobacter koseri (strain ATCC BAA-895 / CDC 4225-83 / SGSC4696).